The sequence spans 346 residues: Olfactory receptor 8G5 (346 aa).

Residues 1–60 (MIIYKQGITFLQKENNNTIHLNTMFFLSPAETHQRMAAENHSFVTKFILVGLTEKSELQL) are Extracellular-facing. N-linked (GlcNAc...) asparagine glycans are attached at residues asparagine 16 and asparagine 40. A helical membrane pass occupies residues 61–81 (PLFLVFLGIYVVTVLGNLGMI). At 82–89 (TLIGLSSH) the chain is on the cytoplasmic side. Residues 90-110 (LHTPMYCFLSSLSFIDFCHST) form a helical membrane-spanning segment. Topologically, residues 111–134 (VITPKMLVNFVTEKNIISYPECMT) are extracellular. The cysteines at positions 132 and 214 are disulfide-linked. A helical membrane pass occupies residues 135–155 (QLYFFLVFAIAECHMLAAMAY). The Cytoplasmic segment spans residues 156-174 (DGYVAICSPLLYSIIISNK). Residues 175 to 195 (ACFSLILVVYVIGLICASAHI) traverse the membrane as a helical segment. Over 196–232 (GCMFRVQFCKFDVINHYFCDLISILKLSCSSTYINEL) the chain is Extracellular. Residues 233 to 252 (LILIFSGINILVPSLTILSS) form a helical membrane-spanning segment. The Cytoplasmic segment spans residues 253 to 272 (YIFIIASILRIRYTEGRSKA). A helical transmembrane segment spans residues 273 to 293 (FSTCSSHISAVSVFFGSAAFM). The Extracellular portion of the chain corresponds to 294–306 (YLQPSSVSSMDQG). The chain crosses the membrane as a helical span at residues 307–327 (KVSSVFYTIVVPMLNPLIYSL). The Cytoplasmic portion of the chain corresponds to 328 to 346 (RNKDVHVALKKTLGKRTFL).

It belongs to the G-protein coupled receptor 1 family.

The protein localises to the cell membrane. In terms of biological role, odorant receptor. This is Olfactory receptor 8G5 (OR8G5) from Homo sapiens (Human).